The primary structure comprises 470 residues: Box C/D snoRNA protein 1 (470 aa).

Positions M1–E70 are disordered. Position 25 is a phosphoserine (S25). The span at E41–L51 shows a compositional bias: gly residues. Residues K79, K108, K118, K138, K143, K153, K162, K173, K183, and K200 each participate in a glycyl lysine isopeptide (Lys-Gly) (interchain with G-Cter in SUMO2) cross-link. 8 residues coordinate Zn(2+): C220, C223, C232, C235, C240, C244, H248, and C254. Residues C220–C254 form an HIT-type zinc finger. K459 participates in a covalent cross-link: Glycyl lysine isopeptide (Lys-Gly) (interchain with G-Cter in SUMO2).

Belongs to the BCD1 family. As to quaternary structure, interacts with FBL, SNU13, NOP58, NUFIP1, RUVBL1, RUVBL2 and TAF9. Interacts (via HIT-type zinc finger) with the RUVBL1/RUVBL2 complex in the presence of ADP.

In terms of biological role, required for box C/D snoRNAs accumulation involved in snoRNA processing, snoRNA transport to the nucleolus and ribosome biogenesis. This Homo sapiens (Human) protein is Box C/D snoRNA protein 1 (ZNHIT6).